A 342-amino-acid chain; its full sequence is Galactose mutarotase (342 aa).

Residue Ser14 is modified to Phosphoserine. Residues 81 to 82 (NR) and His107 contribute to the beta-D-galactose site. A Phosphoserine modification is found at Ser124. His176 (proton donor) is an active-site residue. Residues 176–178 (HSY), Asp243, Gln279, and Glu307 contribute to the beta-D-galactose site. The active-site Proton acceptor is Glu307.

The protein belongs to the aldose epimerase family. In terms of assembly, monomer.

The protein resides in the cytoplasm. It carries out the reaction alpha-D-galactose = beta-D-galactose. It catalyses the reaction alpha-D-glucose = beta-D-glucose. It participates in carbohydrate metabolism; hexose metabolism. It functions in the pathway carbohydrate metabolism; galactose metabolism. In terms of biological role, mutarotase that catalyzes the interconversion of beta-D-galactose and alpha-D-galactose during galactose metabolism. Beta-D-galactose is metabolized in the liver into glucose 1-phosphate, the primary metabolic fuel, by the action of four enzymes that constitute the Leloir pathway: GALM, GALK1 (galactokinase), GALT (galactose-1-phosphate uridylyltransferase) and GALE (UDP-galactose-4'-epimerase). Involved in the maintenance of the equilibrium between the beta- and alpha-anomers of galactose, therefore ensuring a sufficient supply of the alpha-anomer for GALK1. Also active on D-glucose although shows a preference for galactose over glucose. This Rattus norvegicus (Rat) protein is Galactose mutarotase (Galm).